Here is a 209-residue protein sequence, read N- to C-terminus: UPF0502 protein mll4256 (209 aa).

Belongs to the UPF0502 family.

This is UPF0502 protein mll4256 from Mesorhizobium japonicum (strain LMG 29417 / CECT 9101 / MAFF 303099) (Mesorhizobium loti (strain MAFF 303099)).